The following is a 366-amino-acid chain: Phospho-N-acetylmuramoyl-pentapeptide-transferase (366 aa).

A run of 10 helical transmembrane segments spans residues 3 to 23, 54 to 74, 80 to 100, 120 to 140, 161 to 181, 197 to 217, 238 to 258, 262 to 282, 288 to 308, and 341 to 361; these read QIFI…PVLI, GIAV…VGLV, PGVS…LGFA, LVGQ…FPNA, IAIG…YLVI, LASG…FWQF, LSML…WNAA, IFMG…LSVT, LMIL…IQVV, and FWLL…AEWL.

Belongs to the glycosyltransferase 4 family. MraY subfamily. It depends on Mg(2+) as a cofactor.

Its subcellular location is the cell membrane. The catalysed reaction is UDP-N-acetyl-alpha-D-muramoyl-L-alanyl-gamma-D-glutamyl-meso-2,6-diaminopimeloyl-D-alanyl-D-alanine + di-trans,octa-cis-undecaprenyl phosphate = di-trans,octa-cis-undecaprenyl diphospho-N-acetyl-alpha-D-muramoyl-L-alanyl-D-glutamyl-meso-2,6-diaminopimeloyl-D-alanyl-D-alanine + UMP. The protein operates within cell wall biogenesis; peptidoglycan biosynthesis. Functionally, catalyzes the initial step of the lipid cycle reactions in the biosynthesis of the cell wall peptidoglycan: transfers peptidoglycan precursor phospho-MurNAc-pentapeptide from UDP-MurNAc-pentapeptide onto the lipid carrier undecaprenyl phosphate, yielding undecaprenyl-pyrophosphoryl-MurNAc-pentapeptide, known as lipid I. The protein is Phospho-N-acetylmuramoyl-pentapeptide-transferase of Corynebacterium jeikeium (strain K411).